The sequence spans 287 residues: Acetyl-coenzyme A carboxylase carboxyl transferase subunit beta (287 aa).

In terms of domain architecture, CoA carboxyltransferase N-terminal spans 36–287 (MWVKCDRCGK…KVLYKILELH (252 aa)). Residues Cys-40, Cys-43, Cys-59, and Cys-62 each contribute to the Zn(2+) site. The C4-type zinc-finger motif lies at 40–62 (CDRCGKTLYKKDLDENLKVCKFC).

The protein belongs to the AccD/PCCB family. In terms of assembly, acetyl-CoA carboxylase is a heterohexamer composed of biotin carboxyl carrier protein (AccB), biotin carboxylase (AccC) and two subunits each of ACCase subunit alpha (AccA) and ACCase subunit beta (AccD). The cofactor is Zn(2+).

Its subcellular location is the cytoplasm. The catalysed reaction is N(6)-carboxybiotinyl-L-lysyl-[protein] + acetyl-CoA = N(6)-biotinyl-L-lysyl-[protein] + malonyl-CoA. The protein operates within lipid metabolism; malonyl-CoA biosynthesis; malonyl-CoA from acetyl-CoA: step 1/1. Its function is as follows. Component of the acetyl coenzyme A carboxylase (ACC) complex. Biotin carboxylase (BC) catalyzes the carboxylation of biotin on its carrier protein (BCCP) and then the CO(2) group is transferred by the transcarboxylase to acetyl-CoA to form malonyl-CoA. The polypeptide is Acetyl-coenzyme A carboxylase carboxyl transferase subunit beta (Clostridium novyi (strain NT)).